A 349-amino-acid chain; its full sequence is N-formyl peptide receptor 3 (349 aa).

The Extracellular segment spans residues 1 to 27 (METNFSIPLNETEEVLPEPAGHTVLWI). N-linked (GlcNAc...) asparagine glycosylation is found at Asn4 and Asn10. A helical membrane pass occupies residues 28 to 50 (FSLLVHGVTFIFGVLGNGLVIWV). Topologically, residues 51 to 61 (AGFLMTRTVNT) are cytoplasmic. Residues 62-83 (ICYLNLALADFSFSAILPFHMV) form a helical membrane-spanning segment. Topologically, residues 84 to 100 (SVAMREKWPFGSFLCKL) are extracellular. A disulfide bond links Cys98 and Cys176. Residues 101–121 (VHVMIDINLFVSVYLITIIAL) traverse the membrane as a helical segment. Residues 122–140 (DRCICVLHPAWAQNHRTMS) lie on the Cytoplasmic side of the membrane. The chain crosses the membrane as a helical span at residues 141–162 (LAKRVMTGLWILTIVLTLPNFI). The Extracellular portion of the chain corresponds to 163–205 (FWTTISTTNGDTYCIFNFPFWGDTAVERLNVFITMAKVFLILH). A helical membrane pass occupies residues 206–226 (FIIGFSMPMSIITVCYGIIAA). Over 227 to 242 (KIHRNHMIKSSRPLRV) the chain is Cytoplasmic. Residues 243–266 (FAAVVASFFICWFPYELIGILMAV) traverse the membrane as a helical segment. Residues 267-286 (WLKEMLLNGKYKIILVLINP) are Extracellular-facing. The helical transmembrane segment at 287–306 (TSSLAFFNSCLNPILYVFLG) threads the bilayer. The Cytoplasmic segment spans residues 307 to 349 (SNFQERLIRSLPTSLERALTEVPDSAQTSNTHTTSASPPEETE). The segment at 327–349 (EVPDSAQTSNTHTTSASPPEETE) is disordered. Polar residues predominate over residues 331–343 (SAQTSNTHTTSAS).

This sequence belongs to the G-protein coupled receptor 1 family.

The protein resides in the cell membrane. Low affinity receptor for N-formyl-methionyl peptides, which are powerful neutrophils chemotactic factors. Binding of FMLP to the receptor causes activation of neutrophils. This response is mediated via a G-protein that activates a phosphatidylinositol-calcium second messenger system. This chain is N-formyl peptide receptor 3 (FPR3), found in Gorilla gorilla gorilla (Western lowland gorilla).